We begin with the raw amino-acid sequence, 297 residues long: Salivary glue protein Sgs-4 (297 aa).

The N-terminal stretch at 1–21 (MRLELLVVLLVGLAALAPSGS) is a signal peptide. Tandem repeats lie at residues 26 to 32 (TEPPRCE), 33 to 39 (TEPPRCE), 40 to 46 (TEPPRCE), 47 to 53 (TEPPRCE), 54 to 60 (TEPPRCE), 61 to 67 (TTTPKCE), 68 to 74 (TTPPTCR), 75 to 81 (TEPPTCK), 82 to 88 (TEPPTCR), 89 to 95 (TEPPTCK), 96 to 102 (TKPPTCR), 103 to 109 (TEPPTCR), 110 to 116 (TEPPTCK), 117 to 123 (TKPPTCK), 124 to 130 (TEPPTCK), 131 to 137 (TEPPTCR), 138 to 144 (TEPPTCK), 145 to 151 (TEPPTCR), 152 to 158 (TEPPTCK), 159 to 165 (TEPPTCK), and 166 to 172 (TEPPTCK). The tract at residues 26 to 84 (TEPPRCETEPPRCETEPPRCETEPPRCETEPPRCETTTPKCETTPPTCRTEPPTCKTEP) is disordered. Residues 26–179 (TEPPRCETEP…TCKTEPPCEK (154 aa)) are 22 X 7 AA approximate tandem repeats of T-[ETK]-[PT]-P-[RKT]-C-[ERK]. Residues 27–58 (EPPRCETEPPRCETEPPRCETEPPRCETEPPR) show a composition bias toward basic and acidic residues. A compositionally biased stretch (low complexity) spans 59-84 (CETTTPKCETTPPTCRTEPPTCKTEP). Positions 141 to 174 (PTCKTEPPTCRTEPPTCKTEPPTCKTEPPTCKTE) are enriched in low complexity. 2 disordered regions span residues 141–218 (PTCK…SGCG) and 243–297 (PDSK…KGGC). The stretch at 173 to 179 (TEPPCEK) is one 22; approximate repeat. 2 stretches are compositionally biased toward basic residues: residues 181–208 (CTKRIKRHRTKRTKRSKSTKKIVHHHNR) and 282–291 (NTTKKPRKTQ).

Salivary gland.

It is found in the secreted. The sequence is that of Salivary glue protein Sgs-4 (Sgs4) from Drosophila melanogaster (Fruit fly).